The following is a 1132-amino-acid chain: MGANASNYPHSCSPRVGGNSQAQQTFIGTSSYSQQGYGCESKLYSLDHGHEKPQDKKKRTSGLATLKKKFIKRRKSNRSADHAKQMRELLSGWDVRDVNALVEEYEGTSALKELSLQASLARPEARTLQKDMADLYEYKYCTDVDLIFQETCFPVHRAILAARCPFFKTLLSSSPEYGAEIIMDINTAGIDMPMFSALLHYLYTGEFGMEDSRFQNVDILVQLSEEFGTPNSLDVDMRGLFDYMCYYDVVLSFSSDSELVEAFGGNQNCLDEELKAHKAVISARSPFFRNLLQRRIRTGEEITDRTLRTPTRIILDESIIPKKYATVILHCMYTDVVDLSVLHCSPSVGSLSEVQALVAGKPNMTRAEEAMELYHIALFLEFNMLAQGCEDIIAESISLDTLIAILKWSSHPYGSKWVHRQALHFLCEEFSQVMTSDVFYELSKDHLLTAIQSDYLQASEQDILKYLIKWGEHQLMKRIADREPNLLSGTAHSVNKRGVKRRDLDMEELREILSSLLPFVRIEHILPINSEVLSDAMKRGLISTPPSDMLPTTEGGKSNAWLRQKNAGIYVRPRLFSPYVEEAKSVLDEMMVEQTDLVRLRMVRMSNVPDTLYMVNNAVPQCCHMISHQQISSNQSSPPSVVANEIPVPRLLIMKDMVRRLQELRHTEQVQRAYALNCGEGATVSYEIQIRVLREFGLADAAAELLQNPHKFFPDERFGDESPLLTMRQPGRCRVNSTPPAETMFTDLDSFVAFHPPLPPPPPPYHPPATPIHNQLKAGWKQRPPSQHPSRSFSYPCNHSLFHSRTAPKAGPPPVYLPSVKAAPPDCTSTAGLGRQTVAAAAATTTSTATAAAAAASEKQVRTQPVLNDLMPDIAVGVSTLSLKDRRLPELAVDTELSQSVSEAGPGPPQHLSCIPQRHTHTSRKKHTLEQKTDTRENPQEYPDFYDFSNAACRPSTPALSRRTPSPSQGGYFGPDLYSHNKASPSGLKSAYLPGQTSPKKQEEARREYPLSPDGHLHRQKNEPIHLDVVEQPPQRSDFPLAAPENASTGPAHVRGRTAVETDLTFGLTPNRPSLSACSSEAPEERSGRRLADSESLGHGAQRNTDLEREDSISRGRRSPSKPDFLYKKSAL.

Polar residues predominate over residues 1–10 (MGANASNYPH). The tract at residues 1–24 (MGANASNYPHSCSPRVGGNSQAQQ) is disordered. A lipid anchor (N-myristoyl glycine) is attached at glycine 2. BTB domains lie at 142-211 (TDVD…GMED) and 247-341 (YDVV…DLSV). Residues 413-479 (YGSKWVHRQA…WGEHQLMKRI (67 aa)) enclose the BACK domain. A Phosphoserine modification is found at serine 722. 2 disordered regions span residues 897–1019 (LSQS…HLHR) and 1035–1132 (QRSD…KSAL). Positions 918 to 927 (RHTHTSRKKH) are enriched in basic residues. Composition is skewed to basic and acidic residues over residues 928-939 (TLEQKTDTRENP), 1000-1019 (KKQE…HLHR), 1083-1093 (PEERSGRRLAD), and 1105-1114 (TDLEREDSIS). Position 1012 is a phosphoserine (serine 1012).

The protein resides in the nucleus. Functionally, acts as a mediator of epithelial dynamics and organ branching by promoting cleft progression. Induced following accumulation of fibronectin in forming clefts, leading to local expression of the cell-scattering SNAIL2 and suppression of E-cadherin levels, thereby altering cell morphology and reducing cell-cell adhesion. This stimulates cell separation at the base of forming clefts by local, dynamic intercellular gap formation and promotes cleft progression. The chain is BTB/POZ domain-containing protein 7 (BTBD7) from Homo sapiens (Human).